A 350-amino-acid chain; its full sequence is Anthranilate phosphoribosyltransferase (350 aa).

5-phospho-alpha-D-ribose 1-diphosphate-binding positions include Gly-88, 91–92 (GD), Thr-96, 98–101 (NIST), 116–124 (KHGGRSVSS), and Ser-128. Gly-88 contacts anthranilate. A Mg(2+)-binding site is contributed by Ser-100. Position 174 (Arg-174) interacts with anthranilate. Positions 233 and 234 each coordinate Mg(2+).

This sequence belongs to the anthranilate phosphoribosyltransferase family. Homodimer. It depends on Mg(2+) as a cofactor.

It carries out the reaction N-(5-phospho-beta-D-ribosyl)anthranilate + diphosphate = 5-phospho-alpha-D-ribose 1-diphosphate + anthranilate. The protein operates within amino-acid biosynthesis; L-tryptophan biosynthesis; L-tryptophan from chorismate: step 2/5. In terms of biological role, catalyzes the transfer of the phosphoribosyl group of 5-phosphorylribose-1-pyrophosphate (PRPP) to anthranilate to yield N-(5'-phosphoribosyl)-anthranilate (PRA). In Albidiferax ferrireducens (strain ATCC BAA-621 / DSM 15236 / T118) (Rhodoferax ferrireducens), this protein is Anthranilate phosphoribosyltransferase.